We begin with the raw amino-acid sequence, 308 residues long: MIIVTGGAGMIGANIVKALNDMGRKDILVVDNLKDGTKFINLVDLDIADYCDKEDFISSVIAGDDLGDIDAVFHEGACSATTEWDGKYLMHNNYEYSKELLHYCLDREIPFFYASSAATYGDKTDFIEEREFEGPLNAYGYSKFLFDQYVRAILPEANSPVCGFKYFNVYGPREQHKGSMASVAFHLNNQILKGENPKLFAGSEHFLRDFVYVGDVAEVNLWAWENGVSGIFNLGTGNAESFKAVAEAVVKFHGKGEIETIPFPDHLKSRYQEYTQANLTKLRAAGCDFKFKNVAEGVAEYMAWLNRK.

NADP(+) contacts are provided by residues M10 to I11, D31 to N32, K38, K53, E75 to S79, and N92. Y139 serves as the catalytic Proton acceptor. Position 143 (K143) interacts with NADP(+). A substrate-binding site is contributed by N168. NADP(+) contacts are provided by V169 and K177. Catalysis depends on K177, which acts as the Proton acceptor. Residues S179, H186, F200–S203, R208, and Y271 each bind substrate.

This sequence belongs to the NAD(P)-dependent epimerase/dehydratase family. HldD subfamily. Homopentamer. NADP(+) is required as a cofactor.

The enzyme catalyses ADP-D-glycero-beta-D-manno-heptose = ADP-L-glycero-beta-D-manno-heptose. The protein operates within nucleotide-sugar biosynthesis; ADP-L-glycero-beta-D-manno-heptose biosynthesis; ADP-L-glycero-beta-D-manno-heptose from D-glycero-beta-D-manno-heptose 7-phosphate: step 4/4. Its function is as follows. Catalyzes the interconversion between ADP-D-glycero-beta-D-manno-heptose and ADP-L-glycero-beta-D-manno-heptose via an epimerization at carbon 6 of the heptose. The sequence is that of ADP-L-glycero-D-manno-heptose-6-epimerase from Mannheimia succiniciproducens (strain KCTC 0769BP / MBEL55E).